The chain runs to 165 residues: MSTVFNGDETAPFFGFLGAAAALVFSCMGAAYGTAKSGVGVASMGVMRPELVMKSIVPVVMAGVLGIYGLIIAVIISTGINPKAKSYYLFDGYAHLSSGLACGLAGLSAGMAIGIVGDAGVRANAQQPKLFVGMILILIFAEALALYGLIVGIILSSRAGQSRAD.

Topologically, residues 1–12 are lumenal; the sequence is MSTVFNGDETAP. Residues 13-33 form a helical membrane-spanning segment; it reads FFGFLGAAAALVFSCMGAAYG. The Cytoplasmic segment spans residues 34–55; that stretch reads TAKSGVGVASMGVMRPELVMKS. Residues 56 to 76 traverse the membrane as a helical segment; the sequence is IVPVVMAGVLGIYGLIIAVII. Residues 77–95 are Lumenal-facing; sequence STGINPKAKSYYLFDGYAH. A helical membrane pass occupies residues 96-117; the sequence is LSSGLACGLAGLSAGMAIGIVG. Topologically, residues 118–129 are cytoplasmic; the sequence is DAGVRANAQQPK. The chain crosses the membrane as a helical span at residues 130 to 155; that stretch reads LFVGMILILIFAEALALYGLIVGIIL. The Lumenal segment spans residues 156–165; the sequence is SSRAGQSRAD.

This sequence belongs to the V-ATPase proteolipid subunit family. V-ATPase is a heteromultimeric enzyme composed of a peripheral catalytic V1 complex (main components: subunits A, B, C, D, E, and F) attached to an integral membrane V0 proton pore complex (main component: the proteolipid protein; which is present as a hexamer that forms the proton-conducting pore).

It localises to the vacuole membrane. In terms of biological role, proton-conducting pore forming subunit of the membrane integral V0 complex of vacuolar ATPase. V-ATPase is responsible for acidifying a variety of intracellular compartments in eukaryotic cells. This is V-type proton ATPase 16 kDa proteolipid subunit (VMAC1) from Mesembryanthemum crystallinum (Common ice plant).